We begin with the raw amino-acid sequence, 327 residues long: Phenylalanine--tRNA ligase alpha subunit (327 aa).

Glu252 contributes to the Mg(2+) binding site.

This sequence belongs to the class-II aminoacyl-tRNA synthetase family. Phe-tRNA synthetase alpha subunit type 1 subfamily. Tetramer of two alpha and two beta subunits. Mg(2+) is required as a cofactor.

The protein resides in the cytoplasm. It carries out the reaction tRNA(Phe) + L-phenylalanine + ATP = L-phenylalanyl-tRNA(Phe) + AMP + diphosphate + H(+). The polypeptide is Phenylalanine--tRNA ligase alpha subunit (Shewanella baltica (strain OS185)).